The primary structure comprises 316 residues: tRNA dimethylallyltransferase (316 aa).

Position 17–24 (17–24 (GPTASGKT)) interacts with ATP. 19–24 (TASGKT) serves as a coordination point for substrate. Interaction with substrate tRNA regions lie at residues 42 to 45 (DSAL), 166 to 170 (QRLSR), and 247 to 252 (RCVGYR).

The protein belongs to the IPP transferase family. In terms of assembly, monomer. The cofactor is Mg(2+).

It catalyses the reaction adenosine(37) in tRNA + dimethylallyl diphosphate = N(6)-dimethylallyladenosine(37) in tRNA + diphosphate. Its function is as follows. Catalyzes the transfer of a dimethylallyl group onto the adenine at position 37 in tRNAs that read codons beginning with uridine, leading to the formation of N6-(dimethylallyl)adenosine (i(6)A). In Erwinia tasmaniensis (strain DSM 17950 / CFBP 7177 / CIP 109463 / NCPPB 4357 / Et1/99), this protein is tRNA dimethylallyltransferase.